Consider the following 1014-residue polypeptide: Regulator of telomere elongation helicase 1 homolog (1014 aa).

The Helicase ATP-binding domain maps to A7–A324. S42–T49 is a binding site for ATP. Positions 147, 165, 174, and 210 each coordinate [4Fe-4S] cluster. Residues D253–H256 carry the DEAH box motif. T873 bears the Phosphothreonine mark. The tract at residues T891–R917 is disordered. A compositionally biased stretch (low complexity) spans G899 to R917.

It belongs to the helicase family. RAD3/XPD subfamily.

The protein resides in the nucleus. It catalyses the reaction ATP + H2O = ADP + phosphate + H(+). Functionally, a probable ATP-dependent DNA helicase implicated in DNA repair and the maintenance of genomic stability. Acts as an anti-recombinase to counteract toxic recombination and limit crossover during meiosis. Regulates meiotic recombination and crossover homeostasis by physically dissociating strand invasion events and thereby promotes noncrossover repair by meiotic synthesis dependent strand annealing (SDSA) as well as disassembly of D loop recombination intermediates. The sequence is that of Regulator of telomere elongation helicase 1 homolog from Drosophila mojavensis (Fruit fly).